We begin with the raw amino-acid sequence, 359 residues long: MVAAQAKLVYHLNKYYNEKCQARKAAISKSIREVCKVVSDVLKEVEVQEPRFISSLNEMDNRYEGLEVISPTEFEVVLYLNQMGVFNFVDDGSLPGCAVLKLSDGRKRSMSLWVEFITASGYLSARKIRSRFQTLVAQAVDKCSYRDVVKMVADTSEVKLRIRERYVVQITPAFKCTGIWPRSAAHWPLPHIPWPGPNRVAEVKAEGFNLLSKECHTLAGKQSSAESDAWVLQFAEAENRLQLGGCRKKCLSLLKTLRDRHLELPGQPLNNYHMKTLVSYECEKHPRESDWDESCLGDRLNGILLQLISCLQCRRCPHYFLPNLDLFQGKPHSALENAAKQTWRLAREILTNPKSLEKL.

A ribonucleoside 5'-triphosphate contacts are provided by residues 23-24 and 63-66; these read RK and YEGL. Positions 73 and 75 each coordinate Mg(2+). A ribonucleoside 5'-triphosphate contacts are provided by residues K248 and 252-255; that span reads SLLK.

It belongs to the mab-21 family. As to quaternary structure, monomer. Homodecamer; composed of 2 back to back homopentamers. The protein may exist as monomer in solution and oiligomerizes upon ligand binding.

Its subcellular location is the nucleus. In terms of biological role, putative nucleotidyltransferase required for several aspects of embryonic development including normal development of the eye. It is unclear whether it displays nucleotidyltransferase activity in vivo. Binds single-stranded RNA (ssRNA). This chain is Putative nucleotidyltransferase MAB21L1 (mab21l1), found in Xenopus laevis (African clawed frog).